Reading from the N-terminus, the 223-residue chain is Small ribosomal subunit protein uS3 (223 aa).

Residues 38-106 (IREFIAKQLT…RVHINIVEIK (69 aa)) form the KH type-2 domain.

Belongs to the universal ribosomal protein uS3 family. In terms of assembly, part of the 30S ribosomal subunit. Forms a tight complex with proteins S10 and S14.

In terms of biological role, binds the lower part of the 30S subunit head. Binds mRNA in the 70S ribosome, positioning it for translation. The polypeptide is Small ribosomal subunit protein uS3 (Pediococcus pentosaceus (strain ATCC 25745 / CCUG 21536 / LMG 10740 / 183-1w)).